The chain runs to 159 residues: uncharacterized protein (159 aa).

An N-acetyltransferase domain is found at 1–139 (MNIIPTCQVP…TARKMKPEIP (139 aa)).

This is an uncharacterized protein from Bacillus subtilis (strain 168).